Reading from the N-terminus, the 152-residue chain is Superoxide dismutase [Cu-Zn] 2 (152 aa).

Residues His-45, His-47, and His-62 each coordinate Cu cation. The interval 53 to 81 is disordered; that stretch reads TNGSMSTGPHFNPDGKQHGAPEDANRHAG. His-62, His-70, His-79, and Asp-82 together coordinate Zn(2+). Residues 65–81 are compositionally biased toward basic and acidic residues; that stretch reads PDGKQHGAPEDANRHAG. Cu cation is bound at residue His-119.

It belongs to the Cu-Zn superoxide dismutase family. Homodimer. Cu cation serves as cofactor. Zn(2+) is required as a cofactor.

It localises to the cytoplasm. It carries out the reaction 2 superoxide + 2 H(+) = H2O2 + O2. Functionally, destroys radicals which are normally produced within the cells and which are toxic to biological systems. The sequence is that of Superoxide dismutase [Cu-Zn] 2 (SODCC2) from Brassica juncea (Indian mustard).